A 300-amino-acid polypeptide reads, in one-letter code: Ubiquinone biosynthesis protein COQ4, mitochondrial (300 aa).

Zn(2+) contacts are provided by H173, D174, H177, and E189.

Belongs to the COQ4 family. As to quaternary structure, component of a multi-subunit COQ enzyme complex, composed of at least COQ3, COQ4, COQ5, COQ6, COQ7 and COQ9. Zn(2+) is required as a cofactor.

It localises to the mitochondrion inner membrane. It carries out the reaction a 4-hydroxy-3-methoxy-5-(all-trans-polyprenyl)benzoate + H(+) = a 2-methoxy-6-(all-trans-polyprenyl)phenol + CO2. The protein operates within cofactor biosynthesis; ubiquinone biosynthesis. Its function is as follows. Lyase that catalyzes the C1-decarboxylation of 4-hydroxy-3-methoxy-5-(all-trans-polyprenyl)benzoic acid into 2-methoxy-6-(all-trans-polyprenyl)phenol during ubiquinone biosynthesis. The sequence is that of Ubiquinone biosynthesis protein COQ4, mitochondrial from Cryptococcus neoformans var. neoformans serotype D (strain JEC21 / ATCC MYA-565) (Filobasidiella neoformans).